The following is a 117-amino-acid chain: Large ribosomal subunit protein bL20 (117 aa).

The protein belongs to the bacterial ribosomal protein bL20 family.

Binds directly to 23S ribosomal RNA and is necessary for the in vitro assembly process of the 50S ribosomal subunit. It is not involved in the protein synthesizing functions of that subunit. This is Large ribosomal subunit protein bL20 from Geobacter sulfurreducens (strain ATCC 51573 / DSM 12127 / PCA).